Reading from the N-terminus, the 125-residue chain is Neuraminyllactose-binding hemagglutinin (125 aa).

An N-acetyl-neuraminyl-alpha(2,3)-lactose binding motif region spans residues 92 to 97 (KRTIQK).

The protein resides in the cell outer membrane. The sequence is that of Neuraminyllactose-binding hemagglutinin (hpaA) from Helicobacter pylori (Campylobacter pylori).